The following is a 463-amino-acid chain: Serine/threonine-protein kinase sgk-1 (463 aa).

In terms of domain architecture, Protein kinase spans 135-392; that stretch reads FDYLTTIGKG…FRDIRDHPFF (258 aa). Residues 141 to 149 and lysine 164 contribute to the ATP site; that span reads IGKGSFGRV. Residue aspartate 259 is the Proton acceptor of the active site. Residues 393–463 form the AGC-kinase C-terminal domain; sequence LPVDWDKLLN…TFVDTNRVLV (71 aa).

It belongs to the protein kinase superfamily. AGC Ser/Thr protein kinase family. Interacts with pdk-1, akt-1, akt-2 and daf-16. Part of a complex containing sgk-1, akt-1 and akt-2. Interacts with let-92 phosphatase regulatory subunit pptr-1. Mg(2+) serves as cofactor. Expressed in late embryos just before hatching. At postembryonic stages, expressed in sensory and motor neurons and in the intestine. Highly expressed in the intestine and head and tail neurons.

Its subcellular location is the cytoplasm. It localises to the nucleus. The protein resides in the apical cell membrane. It carries out the reaction L-seryl-[protein] + ATP = O-phospho-L-seryl-[protein] + ADP + H(+). The enzyme catalyses L-threonyl-[protein] + ATP = O-phospho-L-threonyl-[protein] + ADP + H(+). Its activity is regulated as follows. Phosphorylated and activated by pdk-1. Its function is as follows. Acts downstream of PI3 kinase age-1 and kinase pdk-1 in the daf-2/insulin receptor-like transduction pathway. Essential role in regulating development, stress response, and longevity. Phosphorylates Forkhead-related daf-16 and the longevity-promoting skn-1 transcription factors, which inhibits their entry into the nucleus and antagonizes their function. Promotes the cytoplasmic localization of the transcription factor pqm-1. Plays a role in the intracellular trafficking of proteins such as mig-14 to the cell membrane, and this may be through positively regulating ceramide synthesis. Acts downstream of rict-1 to regulate fat storage, size, development and vitellogenesis. Downstream of age-1 and together with akt-1/2, promotes cell survival during embryonic development. Plays a role in maintaining the gonadal basement membrane through antagonizing akt-1 activity. Does not appear to play a role in immune function. This chain is Serine/threonine-protein kinase sgk-1, found in Caenorhabditis elegans.